A 670-amino-acid chain; its full sequence is Major fimbrium tip subunit FimD (670 aa).

The N-terminal stretch at Met1–Gly24 is a signal peptide. Residue Cys25 is the site of N-palmitoyl cysteine attachment. The S-diacylglycerol cysteine moiety is linked to residue Cys25. The propeptide occupies Cys25–Arg50.

It belongs to the FimD family. Fimbriae are composed of a major, structural subunit and the minor components FimC, FimD and FimE. Identified in a complex composed of FimC, FimD and FimE (in vitro). The complex interacts with host extracellular matrix proteins, including fibronectin and type I collagen. Interacts with host CXCR4.

It is found in the fimbrium. Its subcellular location is the cell outer membrane. In terms of biological role, probably a component of the fimbrium tip. These long, filamentous pili are attached to the cell surface; they mediate biofilm formation, adhesion onto host cells and onto other bacteria that are part of the oral microbiome. They play an important role in invasion of periodontal tissues and are major virulence factors. FimC, FimD and FimE contribute to interaction with host CXCR4 and thereby down-regulate the TLR2-mediated host immune response. The protein is Major fimbrium tip subunit FimD of Porphyromonas gingivalis (strain ATCC 33277 / DSM 20709 / CIP 103683 / JCM 12257 / NCTC 11834 / 2561).